The chain runs to 120 residues: Ribosome-binding factor A (120 aa).

This sequence belongs to the RbfA family. Monomer. Binds 30S ribosomal subunits, but not 50S ribosomal subunits or 70S ribosomes.

The protein localises to the cytoplasm. Its function is as follows. One of several proteins that assist in the late maturation steps of the functional core of the 30S ribosomal subunit. Associates with free 30S ribosomal subunits (but not with 30S subunits that are part of 70S ribosomes or polysomes). Required for efficient processing of 16S rRNA. May interact with the 5'-terminal helix region of 16S rRNA. This is Ribosome-binding factor A from Buchnera aphidicola subsp. Acyrthosiphon pisum (strain 5A).